Here is a 213-residue protein sequence, read N- to C-terminus: Ras-related protein Rab-25 (213 aa).

Residues serine 21, glycine 24, lysine 25, threonine 26, asparagine 27, serine 38, histidine 39, threonine 43, and threonine 44 each coordinate GTP. Threonine 26 serves as a coordination point for Mg(2+). Short sequence motifs (switch) lie at residues 35–49 (NEFS…GVEF) and 67–84 (DTAG…YYRG). Positions 44 and 67 each coordinate Mg(2+). The GTP site is built by glycine 70, asparagine 125, lysine 126, aspartate 128, alanine 156, and leucine 157. S-geranylgeranyl cysteine attachment occurs at residues cysteine 209 and cysteine 210. Cysteine 210 carries the cysteine methyl ester modification. Residues 211–213 (ISL) constitute a propeptide, removed in mature form.

Belongs to the small GTPase superfamily. Rab family. Interacts (GTP-bound form) with RAB11FIP1, RAB11FIP2, RAB11FIP3 and RAB11FIP4. Interacts (via the hypervariable C-terminal region) with ITGB1 (via the cytoplasmic region); the interaction is GTP-dependent. Interacts with ITGAV. Associates with the integrin alpha-V/beta-1 heterodimer. Interacts with VPS33B. The cofactor is Mg(2+).

The protein localises to the cell membrane. It is found in the cell projection. The protein resides in the pseudopodium membrane. Its subcellular location is the cytoplasmic vesicle. The catalysed reaction is GTP + H2O = GDP + phosphate + H(+). With respect to regulation, regulated by guanine nucleotide exchange factors (GEFs) which promote the exchange of bound GDP for free GTP. Regulated by GTPase activating proteins (GAPs) which increase the GTP hydrolysis activity. Inhibited by GDP dissociation inhibitors (GDIs) which prevent Rab-GDP dissociation. Functionally, the small GTPases Rab are key regulators of intracellular membrane trafficking, from the formation of transport vesicles to their fusion with membranes. Rabs cycle between an inactive GDP-bound form and an active GTP-bound form that is able to recruit to membranes different set of downstream effectors directly responsible for vesicle formation, movement, tethering and fusion. RAB25 regulates epithelial cell differentiation, proliferation and survival, thereby playing key roles in tumorigenesis. Promotes invasive migration of cells in which it functions to localize and maintain integrin alpha-V/beta-1 at the tips of extending pseudopodia. Involved in the regulation of epithelial morphogenesis through the control of CLDN4 expression and localization at tight junctions. May selectively regulate the apical recycling pathway. Together with MYO5B regulates transcytosis. This chain is Ras-related protein Rab-25 (RAB25), found in Bos taurus (Bovine).